A 432-amino-acid polypeptide reads, in one-letter code: Glutamate-1-semialdehyde 2,1-aminomutase (432 aa).

Lysine 267 is subject to N6-(pyridoxal phosphate)lysine.

Belongs to the class-III pyridoxal-phosphate-dependent aminotransferase family. HemL subfamily. In terms of assembly, homodimer. Requires pyridoxal 5'-phosphate as cofactor.

The protein resides in the cytoplasm. It catalyses the reaction (S)-4-amino-5-oxopentanoate = 5-aminolevulinate. It functions in the pathway porphyrin-containing compound metabolism; protoporphyrin-IX biosynthesis; 5-aminolevulinate from L-glutamyl-tRNA(Glu): step 2/2. The polypeptide is Glutamate-1-semialdehyde 2,1-aminomutase (Rhodococcus erythropolis (strain PR4 / NBRC 100887)).